We begin with the raw amino-acid sequence, 779 residues long: Angiomotin-like protein 2 (779 aa).

2 disordered regions span residues 41 to 215 (GGAG…QYPH) and 263 to 308 (QYLQ…TSGS). Basic and acidic residues-rich tracts occupy residues 100–112 (KGEE…EAKA) and 141–152 (RRQDEALRELRH). A required for interaction with CDH5 region spans residues 101-307 (GEELPTYEEA…SAQASSATSG (207 aa)). A Phosphotyrosine; by FGFR1 modification is found at tyrosine 107. Positions 160 to 169 (ERLLQLSLER) are enriched in low complexity. Over residues 177–193 (HMSSSHSFPQLARNQQG) the composition is skewed to polar residues. Residues 196 to 213 (LRGPPAEGPESRGPPPQY) show a composition bias toward pro residues. The segment at 220 to 307 (HETTTAVTDP…SAQASSATSG (88 aa)) is required for interaction with CDH1. Residues 298 to 308 (SAQASSATSGS) are compositionally biased toward low complexity. Residues 308–581 (SAHLAQMEAV…KYLEERAMRQ (274 aa)) adopt a coiled-coil conformation. Residues lysine 347 and lysine 408 each participate in a glycyl lysine isopeptide (Lys-Gly) (interchain with G-Cter in ubiquitin) cross-link. Disordered stretches follow at residues 522-543 (RAQQ…SPEL) and 679-753 (TQGW…GCSS). Over residues 530–539 (APGGSSGSGG) the composition is skewed to gly residues. Composition is skewed to polar residues over residues 680–690 (QGWQGLSSSER) and 725–740 (DGST…TSTC). Residues serine 759 and serine 762 each carry the phosphoserine modification. The short motif at 776–779 (EILI) is the PDZ-binding element.

The protein belongs to the angiomotin family. As to quaternary structure, part of a complex composed of AMOTL2, MAGI1 and CDH5, within the complex AMOTL2 acts as a scaffold protein for the interaction of MAGI1 with CDH5. The complex is required for coupling actin fibers to cell junctions in endothelial cells. Within the complex AMOTL2 (via its N-terminus) interacts with CDH5. Interacts (via N-terminus) with MAGI1. Interacts (via N-terminus) with ACTB; the interaction facilitates binding of cell junction complexes to actin fibers in endothelial cells. Interacts with CDH1; the interaction may facilitate binding of radial actin fibers to cell junction complexes. Interacts with SRC. Interacts with YAP1; the interaction is required for ubiquitination of AMOTL2 and localization of YAP1 to tight junctions. Interacts with WWP1; the interaction facilitates WWP1 interaction with the Crumbs complex and subsequent WWP1 translocation to the plasma membrane. WWP1 interaction with the Crumbs complex promotes WWP1 monoubiquitination of AMOTL2 which subsequently activates the Hippo signaling pathway. When ubiquitinated interacts with LATS2 (via UBA domain); the interaction promotes LATS2 phosphorylation of YAP1. Interacts (via PPXY motif) with WWTR1/TAZ (via WW domain); the interaction promotes WWTR1/TAZ localization to the cytoplasm and thereby inhibition of its transcriptional properties. Interacts with PHLDB2; interaction may facilitate PHLDB2 localization to the myotube podosome cortex that surrounds the core. In terms of processing, monoubiquitinated at Lys-347 and Lys-408 by Crumbs complex-bound WWP1. De-ubiquitinated at Lys-347 and Lys-408 by USP9X; the interaction may be promoted by cell contact inhibition. Deubiquitination of AMOTL2 negatively regulates Hippo signaling activation. Post-translationally, phosphorylation at Tyr-107 is necessary for efficient binding to SRC and synergistically functioning with SRC to activate the downstream MAPK pathway.

It localises to the recycling endosome. The protein resides in the cytoplasm. The protein localises to the cell projection. Its subcellular location is the podosome. It is found in the cell junction. Functionally, regulates the translocation of phosphorylated SRC to peripheral cell-matrix adhesion sites. Required for proper architecture of actin filaments. Plays a role in coupling actin fibers to cell junctions in endothelial cells and is therefore required for correct endothelial cell morphology via facilitating transcellular transmission of mechanical force resulting in endothelial cell elongation. Required for the anchoring of radial actin fibers to CDH1 junction complexes at the cell membrane which facilitates organization of radial actin fiber structure and cellular response to contractile forces. This contributes to maintenance of cell area, size, shape, epithelial sheet organization and trophectoderm cell properties that facilitate blastocyst zona hatching. Inhibits the Wnt/beta-catenin signaling pathway, probably by recruiting CTNNB1 to recycling endosomes and hence preventing its translocation to the nucleus. Participates in angiogenesis. Activates the Hippo signaling pathway in response to cell contact inhibition via interaction with and ubiquitination by Crumbs complex-bound WWP1. Ubiquitinated AMOTL2 then interacts with LATS2 which in turn phosphorylates YAP1, excluding it from the nucleus and localizing it to the cytoplasm and tight junctions, therefore ultimately repressing YAP1-driven transcription of target genes. Acts to inhibit WWTR1/TAZ transcriptional coactivator activity via sequestering WWTR1/TAZ in the cytoplasm and at tight junctions. Regulates the size and protein composition of the podosome cortex and core at myofibril neuromuscular junctions. Selectively promotes FGF-induced MAPK activation through SRC. May play a role in the polarity, proliferation and migration of endothelial cells. In Homo sapiens (Human), this protein is Angiomotin-like protein 2.